The sequence spans 372 residues: MFIWQRKSILLGRSILGSGRVTVAGIIGSSRKRYTSSSSSSSSPSSKESAPVFTSKELEVARKERLDGLGPFVSRLPKKWIPYAELMRLEKPVGTWLLYLPCSWSILMGAMMQGATLSATAGMLGIFGVGALVMRGAGCTINDFLDRKLDQRVIRSVERPIASGRVSPRRALVFLGAQTLVGMGVLSLLPAQCWWLGLASLPIVFTYPLFKRFTYYPQAALSACFNWGALLGFPAMGVMSWPTMIPLYLSSYLWCMTYDTIYAHQDKKFDIKAGIKSTALAWGPRTKSIMKAMSASQIALLAVAGLNSGLLWGPGFIGGLGVFAYRLFSMIKKVDLDNPKNCWKYFNANINTGLYFTYALAVDYILRLFGFL.

The N-terminal 42 residues, 1-42 (MFIWQRKSILLGRSILGSGRVTVAGIIGSSRKRYTSSSSSSS), are a transit peptide targeting the mitochondrion. 7 helical membrane passes run 92–112 (PVGTWLLYLPCSWSILMGAMM), 114–134 (GATLSATAGMLGIFGVGALVM), 171–191 (ALVFLGAQTLVGMGVLSLLPA), 193–213 (CWWLGLASLPIVFTYPLFKRF), 229–249 (ALLGFPAMGVMSWPTMIPLYL), 298–318 (IALLAVAGLNSGLLWGPGFIG), and 352–372 (TGLYFTYALAVDYILRLFGFL).

Belongs to the UbiA prenyltransferase family. The cofactor is Mg(2+).

The protein resides in the mitochondrion inner membrane. It catalyses the reaction an all-trans-polyprenyl diphosphate + 4-hydroxybenzoate = a 4-hydroxy-3-(all-trans-polyprenyl)benzoate + diphosphate. It functions in the pathway cofactor biosynthesis; ubiquinone biosynthesis. In terms of biological role, catalyzes the prenylation of para-hydroxybenzoate (PHB) with an all-trans polyprenyl group. Mediates the second step in the final reaction sequence of coenzyme Q (CoQ) biosynthesis, which is the condensation of the polyisoprenoid side chain with PHB, generating the first membrane-bound Q intermediate. The sequence is that of 4-hydroxybenzoate polyprenyltransferase, mitochondrial from Saccharomyces cerevisiae (strain ATCC 204508 / S288c) (Baker's yeast).